Here is a 2203-residue protein sequence, read N- to C-terminus: MMMMMMMKKMQHQRQQQEDHANEANYARGTRLPISGEGPTSQPNSSKQTVLSWQAAIDAARQAKAAQTMSTSAPPPVGSLSQRKRQQYAKSKKQGNSSNSRPARALFCLSLNNPIRRACISIVDWKPFDIFILLAIFANCVALAIYIPFPEDDSNSTNHNLEKVEYAFLIIFTVETFLKIIASGLLLHPNASVRNGWNLLDFVIVIVGLFSVILEQLTKETEGGNHSSGKSGGFDVKALRAFRVLRPLRLVSGVPSLQVVLNSIIKAMVPLLHIALLVLFVIIIYAIIGLELFIGKMHKTCFFADSDIVAEEDPAPCAFSGNGRQCAANGTECRSGWVGPNGGITNFDNFAFAMLTVFQCITMEGWTDVLYWVNDAIGWEWPWVYFVSLIILGSFFVLNLVLGVLSGEFSKEREKAKARGDFQKLREKQQLEEDLKGYLDWITQAEDIDPENEEEGGEEGKRNTSMPTSETESVNTENVSGEGETQGCCGSLWCWWKRRGAAKTGPSGCRRWGQAISKSKLRSHGAREALCVCRCSLESLVKLWTSRFSAHLQAAYVRPYSRRWRRWNRFNRRRCRAAVKSVTFYWLVIVLVFLNTLTISSEHYNQPDWLTQIQDIANKVLLALFTCEMLVKMYSLGLQAYFVSLFNRFDCFVVCGGITETILVELELMSPLGVSVFRCVRLLRIFKVTRHWTSLSNLVASLLNSMKSIASLLLLLFLFIIIFSLLGMQLFGGKFNFDETQTKRSTFDNFPQALLTVFQILTGEDWNAVMYDGIMAYGGPSSSGMIVCIYFIILFICGNYILLKLFLAIAVDNLADAESLNTAQKEEAEEKERKKIARKESLENKKNNKPEVNQIANSDNKVTIDDYQEEAEDKDPYPPCDVPVGEEEEEEEEDEPEVPAGPRPRRISELNMKEKIAPIPEGSAFFILSKTNPIRVGCHKLINHHIFTNLILVFIMLSSAALAAEDPIRSHSFRNTILGYFDYAFTAIFTVEILLKMTTFGAFLHKGAFCRNYFNLLDMLVVGVSLVSFGIQSSAISVVKILRVLRVLRPLRAINRAKGLKHVVQCVFVAIRTIGNIMIVTTLLQFMFACIGVQLFKGKFYRCTDEAKSNPEECRGLFILYKDGDVDSPVVRERIWQNSDFNFDNVLSAMMALFTVSTFEGWPALLYKAIDSNGENVGPVYNYRVEISIFFIIYIIIVAFFMMNIFVGFVIVTFQEQGEKEYKNCELDKNQRQCVEYALKARPLRRYIPKNPYQYKFWYVVNSSPFEYMMFVLIMLNTLCLAMQHYEQSKMFNDAMDILNMVFTGVFTVEMVLKVIAFKPKGYFSDAWNTFDSLIVIGSIIDVALSEADNSEESNRISITFFRLFRVMRLVKLLSRGEGIRTLLWTFIKSFQALPYVALLIAMLFFIYAVIGMQMFGKVAMRDNNQINRNNNFQTFPQAVLLLFRCATGEAWQEIMLACLPGKLCDPDSDYNPGEEYTCGSNFAIVYFISFYMLCAFLIINLFVAVIMDNFDYLTRDWSILGPHHLDEFKRIWSEYDPEAKGRIKHLDVVTLLRRIQPPLGFGKLCPHRVACKRLVAMNMPLNSDGTVMFNATLFALVRTALKIKTEGNLEQANEELRAVIKKIWKKTSMKLLDQVVPPAGDDEVTVGKFYATFLIQDYFRKFKKRKEQGLVGKYPAKNTTIALQAGLRTLHDIGPEIRRAISCDLQDDEPEDSKPEEEDVFKRNGALLGNYVNHVNSDRRESLQQTNTTHRPLHVQRPSIPPASDTEKPLFPPAGNSVCHNHHNHNSIGKQVPTSTNANLNNANMSKAAHGKRPSIGDLEHVSENGHYSYKHDRELQRRSSIKRTRYYETYIRSESGDEQLPTIFREDPEIHGYFRDPRCFGEQEYFSSEECCEDDSSPTWSRQNYSYYNRYPGSSMDFERPRGYHHPQGFLEDDDSPIGYDSRRSPRRRLLPPTPPSHRRSSFNFECLRRQNSQDDVLPSPALPHRAALPLHLMQQQIMAVAGLDSSKAQKYSPSHSTRSWATPPATPPYRDWTPCYTPLIQVDRSESMDQVNGSLPSLHRSSWYTDEPDISYRTFTPASLTVPSSFRNKNSDKQRSADSLVEAVLISEGLGRYARDPKFVSATKHEIADACDLTIDEMESAASTLLNGSVCPRANGDMGPISHRQDYELQDFGPGYSDEEPDPGREEEDLADEMICITTL.

Disordered stretches follow at residues 1 to 51 (MMMM…QTVL) and 64 to 100 (KAAQ…SSNS). Topologically, residues 1 to 126 (MMMMMMMKKM…RACISIVDWK (126 aa)) are cytoplasmic. The segment covering 38–51 (GPTSQPNSSKQTVL) has biased composition (polar residues). Over residues 82-93 (QRKRQQYAKSKK) the composition is skewed to basic residues. The stretch at 112–408 (NNPIRRACIS…NLVLGVLSGE (297 aa)) is one I repeat. The chain crosses the membrane as a helical span at residues 127-145 (PFDIFILLAIFANCVALAI). Topologically, residues 146–163 (YIPFPEDDSNSTNHNLEK) are extracellular. The N-linked (GlcNAc...) asparagine glycan is linked to N155. The helical transmembrane segment at 164-183 (VEYAFLIIFTVETFLKIIAS) threads the bilayer. Over 184–195 (GLLLHPNASVRN) the chain is Cytoplasmic. Residues 196-214 (GWNLLDFVIVIVGLFSVIL) traverse the membrane as a helical segment. The Extracellular segment spans residues 215 to 235 (EQLTKETEGGNHSSGKSGGFD). N225 carries N-linked (GlcNAc...) asparagine glycosylation. Residues 236 to 254 (VKALRAFRVLRPLRLVSGV) form a helical membrane-spanning segment. Residues 255 to 273 (PSLQVVLNSIIKAMVPLLH) lie on the Cytoplasmic side of the membrane. A helical membrane pass occupies residues 274–293 (IALLVLFVIIIYAIIGLELF). Residues 294 to 381 (IGKMHKTCFF…WVNDAIGWEW (88 aa)) lie on the Extracellular side of the membrane. N-linked (GlcNAc...) asparagine glycosylation occurs at N329. E364 provides a ligand contact to Ca(2+). A helical membrane pass occupies residues 382–406 (PWVYFVSLIILGSFFVLNLVLGVLS). The Cytoplasmic portion of the chain corresponds to 407–582 (GEFSKEREKA…RRCRAAVKSV (176 aa)). The tract at residues 429–446 (QQLEEDLKGYLDWITQAE) is binding to the beta subunit. The segment at 449–480 (DPENEEEGGEEGKRNTSMPTSETESVNTENVS) is disordered. Polar residues predominate over residues 463–479 (NTSMPTSETESVNTENV). An II repeat occupies 528 to 774 (EALCVCRCSL…DWNAVMYDGI (247 aa)). The chain crosses the membrane as a helical span at residues 583–602 (TFYWLVIVLVFLNTLTISSE). At 603-617 (HYNQPDWLTQIQDIA) the chain is on the extracellular side. A helical transmembrane segment spans residues 618–636 (NKVLLALFTCEMLVKMYSL). At 637 to 644 (GLQAYFVS) the chain is on the cytoplasmic side. A helical membrane pass occupies residues 645–663 (LFNRFDCFVVCGGITETIL). The Extracellular segment spans residues 664–673 (VELELMSPLG). The helical transmembrane segment at 674-692 (VSVFRCVRLLRIFKVTRHW) threads the bilayer. Over 693–711 (TSLSNLVASLLNSMKSIAS) the chain is Cytoplasmic. Residues 712-732 (LLLLLFLFIIIFSLLGMQLFG) form a helical membrane-spanning segment. The Extracellular segment spans residues 733-786 (GKFNFDETQTKRSTFDNFPQALLTVFQILTGEDWNAVMYDGIMAYGGPSSSGMI). Position 764 (E764) interacts with Ca(2+). The chain crosses the membrane as a helical span at residues 787–811 (VCIYFIILFICGNYILLKLFLAIAV). At 812 to 945 (DNLADAESLN…VGCHKLINHH (134 aa)) the chain is on the cytoplasmic side. Positions 822-909 (TAQKEEAEEK…AGPRPRRISE (88 aa)) are disordered. A compositionally biased stretch (basic and acidic residues) spans 824–849 (QKEEAEEKERKKIARKESLENKKNNK). The span at 850-861 (PEVNQIANSDNK) shows a compositional bias: polar residues. Residues 884–897 (VGEEEEEEEEDEPE) show a composition bias toward acidic residues. The III repeat unit spans residues 892–1174 (EEDEPEVPAG…LLYKAIDSNG (283 aa)). The chain crosses the membrane as a helical span at residues 946-964 (IFTNLILVFIMLSSAALAA). The Extracellular segment spans residues 965-980 (EDPIRSHSFRNTILGY). Residues 981 to 1000 (FDYAFTAIFTVEILLKMTTF) form a helical membrane-spanning segment. Residues 1001–1012 (GAFLHKGAFCRN) are Cytoplasmic-facing. The helical transmembrane segment at 1013–1031 (YFNLLDMLVVGVSLVSFGI) threads the bilayer. Residues 1032-1037 (QSSAIS) are Extracellular-facing. A helical membrane pass occupies residues 1038–1057 (VVKILRVLRVLRPLRAINRA). Topologically, residues 1058 to 1076 (KGLKHVVQCVFVAIRTIGN) are cytoplasmic. The chain crosses the membrane as a helical span at residues 1077 to 1096 (IMIVTTLLQFMFACIGVQLF). Over 1097-1186 (KGKFYRCTDE…VGPVYNYRVE (90 aa)) the chain is Extracellular. Positions 1134–1224 (RIWQNSDFNF…QEQGEKEYKN (91 aa)) are dihydropyridine binding. E1160 is a binding site for Ca(2+). Residues 1187–1207 (ISIFFIIYIIIVAFFMMNIFV) traverse the membrane as a helical segment. Topologically, residues 1208–1264 (GFVIVTFQEQGEKEYKNCELDKNQRQCVEYALKARPLRRYIPKNPYQYKFWYVVNSS) are cytoplasmic. The stretch at 1211 to 1486 (IVTFQEQGEK…YTCGSNFAIV (276 aa)) is one IV repeat. A helical transmembrane segment spans residues 1265-1283 (PFEYMMFVLIMLNTLCLAM). The Extracellular segment spans residues 1284–1298 (QHYEQSKMFNDAMDI). A helical transmembrane segment spans residues 1299 to 1318 (LNMVFTGVFTVEMVLKVIAF). Topologically, residues 1319-1325 (KPKGYFS) are cytoplasmic. A helical membrane pass occupies residues 1326-1347 (DAWNTFDSLIVIGSIIDVALSE). Residues 1348 to 1357 (ADNSEESNRI) are Extracellular-facing. A helical membrane pass occupies residues 1358-1377 (SITFFRLFRVMRLVKLLSRG). At 1378-1396 (EGIRTLLWTFIKSFQALPY) the chain is on the cytoplasmic side. Residues 1397–1416 (VALLIAMLFFIYAVIGMQMF) form a helical membrane-spanning segment. Topologically, residues 1417 to 1483 (GKVAMRDNNQ…GEEYTCGSNF (67 aa)) are extracellular. The dihydropyridine binding stretch occupies residues 1464–1530 (LCDPDSDYNP…LGPHHLDEFK (67 aa)). The tract at residues 1476-1519 (EYTCGSNFAIVYFISFYMLCAFLIINLFVAVIMDNFDYLTRDWS) is phenylalkylamine binding. A helical transmembrane segment spans residues 1484–1508 (AIVYFISFYMLCAFLIINLFVAVIM). Topologically, residues 1509 to 2203 (DNFDYLTRDW…ADEMICITTL (695 aa)) are cytoplasmic. Disordered regions lie at residues 1734–1766 (NHVN…PASD), 1795–1816 (TSTN…KRPS), 1920–1963 (FERP…HRRS), and 2176–2195 (GPGY…DLAD). The segment covering 1795–1806 (TSTNANLNNANM) has biased composition (polar residues). Residues 2180–2195 (SDEEPDPGREEEDLAD) are compositionally biased toward acidic residues.

The protein belongs to the calcium channel alpha-1 subunit (TC 1.A.1.11) family. CACNA1D subfamily. Voltage-dependent calcium channels are multisubunit complexes, consisting of alpha-1, alpha-2, beta and delta subunits in a 1:1:1:1 ratio. The channel activity is directed by the pore-forming and voltage-sensitive alpha-1 subunit. In many cases, this subunit is sufficient to generate voltage-sensitive calcium channel activity. The auxiliary subunits beta and alpha-2/delta linked by a disulfide bridge regulate the channel activity. Interacts with CABP1 and CABP4, resulting in a near elimination of calcium-dependent inactivation of the channel. Interacts with RIMBP2. In terms of tissue distribution, expressed in brain, pancreatic islets and B-lymphocytes.

The protein resides in the membrane. The catalysed reaction is Ca(2+)(in) = Ca(2+)(out). Voltage-sensitive calcium channels (VSCC) mediate the entry of calcium ions into excitable cells and are also involved in a variety of calcium-dependent processes, including muscle contraction, hormone or neurotransmitter release, gene expression, cell motility, cell division and cell death. The isoform alpha-1D gives rise to L-type calcium currents. Long-lasting (L-type) calcium channels belong to the 'high-voltage activated' (HVA) group. They are blocked by dihydropyridines (DHP), phenylalkylamines, and by benzothiazepines. In terms of biological role, voltage-sensitive calcium channels (VSCC) mediate the entry of calcium ions into excitable cells and are also involved in a variety of calcium-dependent processes, including muscle contraction, hormone or neurotransmitter release, gene expression, cell motility, cell division and cell death. The isoform alpha-1D gives rise to L-type calcium currents. The chain is Voltage-dependent L-type calcium channel subunit alpha-1D (Cacna1d) from Rattus norvegicus (Rat).